The primary structure comprises 597 residues: MADLLGSMRRTHNCGVLRKEDTGKTVTLMGWAQRWRDHGGVIFIDLRDRYGVTQVVFNPENNAEVHKLADSIRSEWVIAVQGEVLERPDGMVNPKMETGEIEVMVSDLKILNKSKTPPFMVEDNAEVSENLRLEYRYLDLRRPRIAKNIMLRHQVGACVRAFLNENEFLDIETPVLTKSTPEGARDYLVPSRVNTGLFYALPQSPQLFKQLLMVAGYDRYYQIVRCFRDEDLRADRQPEFTQIDLEMSFVGEEDVMGIAEQMIAKVFKDVMGKEVKTPFDRLTYKDAMDRYGLDKPDLRFDLELKEVSSIVEGSDFKVFASVVKKGGMVKAMNAKGCAHFSRKVIDDLTAFVAVYGAKGLAWIKVKEDGSWQSPIAKFFTDDEKAAMAQTLDMAPGDLIFFVADNVKVTNDALGHLRNRVAKELGLIDENEFRFVWVTEFPLVEYDETDKRYVALHHPFTAPMEEDLDLLESDPGAVRSRAYDMVLNGTELGGGSIRIHQPEMQEKVFNMLGLGQEEAEEKFGFLLKALAFGAPPHGGLAFGFDRLIMLLSGENSIRDIIPFPKTQKAACLLTDAPSEVAFEQLAELALRIKKDPAS.

E182 serves as a coordination point for L-aspartate. The aspartate stretch occupies residues 206–209 (QLFK). R228 is an L-aspartate binding site. Residues 228-230 (RDE) and Q237 each bind ATP. Residue H456 participates in L-aspartate binding. E490 is an ATP binding site. L-aspartate is bound at residue R497. 542-545 (GFDR) contributes to the ATP binding site.

It belongs to the class-II aminoacyl-tRNA synthetase family. Type 1 subfamily. As to quaternary structure, homodimer.

It is found in the cytoplasm. The enzyme catalyses tRNA(Asx) + L-aspartate + ATP = L-aspartyl-tRNA(Asx) + AMP + diphosphate. Aspartyl-tRNA synthetase with relaxed tRNA specificity since it is able to aspartylate not only its cognate tRNA(Asp) but also tRNA(Asn). Reaction proceeds in two steps: L-aspartate is first activated by ATP to form Asp-AMP and then transferred to the acceptor end of tRNA(Asp/Asn). This is Aspartate--tRNA(Asp/Asn) ligase from Desulfatibacillum aliphaticivorans.